We begin with the raw amino-acid sequence, 122 residues long: Ribosome-binding factor A (122 aa).

This sequence belongs to the RbfA family. Monomer. Binds 30S ribosomal subunits, but not 50S ribosomal subunits or 70S ribosomes.

It is found in the cytoplasm. Its function is as follows. One of several proteins that assist in the late maturation steps of the functional core of the 30S ribosomal subunit. Associates with free 30S ribosomal subunits (but not with 30S subunits that are part of 70S ribosomes or polysomes). Required for efficient processing of 16S rRNA. May interact with the 5'-terminal helix region of 16S rRNA. The sequence is that of Ribosome-binding factor A from Cupriavidus pinatubonensis (strain JMP 134 / LMG 1197) (Cupriavidus necator (strain JMP 134)).